Here is a 309-residue protein sequence, read N- to C-terminus: Aspartate carbamoyltransferase catalytic subunit (309 aa).

Positions 55 and 56 each coordinate carbamoyl phosphate. Residue lysine 85 participates in L-aspartate binding. Carbamoyl phosphate is bound by residues arginine 106, histidine 135, and glutamine 138. L-aspartate contacts are provided by arginine 168 and arginine 230. Carbamoyl phosphate contacts are provided by leucine 268 and proline 269.

This sequence belongs to the aspartate/ornithine carbamoyltransferase superfamily. ATCase family. As to quaternary structure, heterododecamer (2C3:3R2) of six catalytic PyrB chains organized as two trimers (C3), and six regulatory PyrI chains organized as three dimers (R2).

It carries out the reaction carbamoyl phosphate + L-aspartate = N-carbamoyl-L-aspartate + phosphate + H(+). It participates in pyrimidine metabolism; UMP biosynthesis via de novo pathway; (S)-dihydroorotate from bicarbonate: step 2/3. In terms of biological role, catalyzes the condensation of carbamoyl phosphate and aspartate to form carbamoyl aspartate and inorganic phosphate, the committed step in the de novo pyrimidine nucleotide biosynthesis pathway. This chain is Aspartate carbamoyltransferase catalytic subunit, found in Aliivibrio salmonicida (strain LFI1238) (Vibrio salmonicida (strain LFI1238)).